An 898-amino-acid chain; its full sequence is Cip1-interacting zinc finger protein (898 aa).

3 disordered regions span residues 48 to 69, 157 to 305, and 318 to 471; these read QAPL…QPLL, QSLL…ALEA, and VQAQ…QPQV. Residues 170-203 are compositionally biased toward polar residues; sequence NPSQFNLSGRNPQKQARTSSSTTPNRKDSSSQTM. Residue serine 209 is modified to Phosphoserine. Threonine 244 carries the phosphothreonine modification. Residues 263-273 show a composition bias toward basic and acidic residues; the sequence is RSSEEPTEKEP. Lysine 280 participates in a covalent cross-link: Glycyl lysine isopeptide (Lys-Gly) (interchain with G-Cter in SUMO2). Residues 318–327 show a composition bias toward low complexity; the sequence is VQAQVQSQTQ. Residues 328–351 are compositionally biased toward polar residues; sequence PRIPSTDTQVQPKLQKQAQTQTSP. Lysine 340 is covalently cross-linked (Glycyl lysine isopeptide (Lys-Gly) (interchain with G-Cter in SUMO2)). At serine 350 the chain carries Phosphoserine. Positions 355–383 are enriched in low complexity; that stretch reads VLQQKQVQPQLQQEAEPQKQVQPQVQPQA. A compositionally biased stretch (polar residues) spans 384 to 395; the sequence is HSQGPRQVQLQQ. Lysine 401 participates in a covalent cross-link: Glycyl lysine isopeptide (Lys-Gly) (interchain with G-Cter in SUMO2). Residues 402-435 show a composition bias toward low complexity; it reads QVQPQVQPQAHSQPPRQVQLQLQKQVQTQTYPQV. The segment covering 436–445 has biased composition (polar residues); sequence HTQAQPSVQP. A Phosphoserine modification is found at serine 547. Residue lysine 549 forms a Glycyl lysine isopeptide (Lys-Gly) (interchain with G-Cter in SUMO2) linkage. A disordered region spans residues 562–584; it reads STVPLTPVPRPSDSVSSTPAATS. Threonine 567 is modified (phosphothreonine). The segment covering 572–584 has biased composition (low complexity); that stretch reads PSDSVSSTPAATS. Residues lysine 588, lysine 680, and lysine 705 each participate in a glycyl lysine isopeptide (Lys-Gly) (interchain with G-Cter in SUMO2) cross-link. A Matrin-type zinc finger spans residues 799-830; it reads YICRICHKFYHSNSGAQLSHCKSLGHFENLQK. Serine 821 bears the Phosphoserine mark. Residue lysine 830 forms a Glycyl lysine isopeptide (Lys-Gly) (interchain with G-Cter in SUMO2) linkage. Serine 838 is modified (phosphoserine). Over residues 859-879 the composition is skewed to polar residues; the sequence is LFTSSGRPPSQPNTQDKTPSK. Positions 859 to 898 are disordered; that stretch reads LFTSSGRPPSQPNTQDKTPSKVTARPSQPPLPRRSTRLKT. A Glycyl lysine isopeptide (Lys-Gly) (interchain with G-Cter in SUMO2) cross-link involves residue lysine 879.

In terms of assembly, interacts with CIP/WAF1.

It localises to the nucleus. In terms of biological role, may regulate the subcellular localization of CIP/WAF1. This Homo sapiens (Human) protein is Cip1-interacting zinc finger protein (CIZ1).